The sequence spans 290 residues: 3-deoxy-manno-octulosonate cytidylyltransferase, mitochondrial (290 aa).

A mitochondrion-targeting transit peptide spans 1 to 50 (MSVCSSSSSSQKTWIVNGILAGTAIAAAIGARAYLGRSKKFRSRVVGIIP).

The protein belongs to the KdsB family. It depends on Mg(2+) as a cofactor. Expressed in roots, leaves, stems and siliques.

It is found in the mitochondrion outer membrane. The catalysed reaction is 3-deoxy-alpha-D-manno-oct-2-ulosonate + CTP = CMP-3-deoxy-beta-D-manno-octulosonate + diphosphate. The protein operates within nucleotide-sugar biosynthesis; CMP-3-deoxy-D-manno-octulosonate biosynthesis; CMP-3-deoxy-D-manno-octulosonate from 3-deoxy-D-manno-octulosonate and CTP: step 1/1. Its activity is regulated as follows. Inhibited by 2beta-deoxy-Kdo. Functionally, catalyzes the production of the sugar nucleotide CMP-3-deoxy-D-manno-octulosonate (CMP-KDO). CTP is the preferred nucleotide donor, but it can partially be replaced with UTP. Activates KDO during the biosynthesis of rhamnogalacturonan II (RG-II), a structurally complex pectic polysaccharide of the primary cell wall. RG-II is essential for the cell wall integrity of rapidly growing tissues and pollen tube growth and elongation. The sequence is that of 3-deoxy-manno-octulosonate cytidylyltransferase, mitochondrial from Arabidopsis thaliana (Mouse-ear cress).